We begin with the raw amino-acid sequence, 439 residues long: Xylose isomerase (439 aa).

Active-site residues include histidine 101 and aspartate 104. Glutamate 232, glutamate 268, histidine 271, aspartate 296, aspartate 307, aspartate 309, and aspartate 339 together coordinate Mg(2+).

Belongs to the xylose isomerase family. Homotetramer. Mg(2+) is required as a cofactor.

It localises to the cytoplasm. It catalyses the reaction alpha-D-xylose = alpha-D-xylulofuranose. The protein is Xylose isomerase of Yersinia enterocolitica serotype O:8 / biotype 1B (strain NCTC 13174 / 8081).